Reading from the N-terminus, the 107-residue chain is MLALLYIPAALAEITGCFSFWAWIRLHKSPLWLLPGIASLLLFAWLLTFSPAENAGKAYAVYGGIYIIMSLLWSWKVEATPPDHWDLIGAAFCLVGAAIILWMPRSL.

The next 4 membrane-spanning stretches (helical) occupy residues Leu4–Ile24, Ser29–Phe49, Ala55–Trp75, and His84–Pro104.

Belongs to the UPF0060 family.

It is found in the cell inner membrane. This Zymomonas mobilis subsp. mobilis (strain ATCC 31821 / ZM4 / CP4) protein is UPF0060 membrane protein ZMO1566.